A 155-amino-acid polypeptide reads, in one-letter code: UPF0178 protein TDE_2151 (155 aa).

It belongs to the UPF0178 family.

This chain is UPF0178 protein TDE_2151, found in Treponema denticola (strain ATCC 35405 / DSM 14222 / CIP 103919 / JCM 8153 / KCTC 15104).